A 293-amino-acid polypeptide reads, in one-letter code: Protease HtpX (293 aa).

The next 2 membrane-spanning stretches (helical) occupy residues 4-24 (IALF…VLSL) and 34-54 (GLMI…LLMS). His139 is a binding site for Zn(2+). Glu140 is an active-site residue. Zn(2+) is bound at residue His143. Helical transmembrane passes span 158 to 178 (VVNT…AGFL) and 193 to 213 (MVYF…ASII). Glu222 contacts Zn(2+).

The protein belongs to the peptidase M48B family. The cofactor is Zn(2+).

The protein localises to the cell inner membrane. The protein is Protease HtpX of Yersinia pseudotuberculosis serotype O:1b (strain IP 31758).